The sequence spans 299 residues: uncharacterized protein (299 aa).

A disordered region spans residues 1–38; the sequence is MSLDSNSDTEFELVPKFQTQPTRGDAPKSPELEEVSTV.

This sequence belongs to the calycin superfamily. Fatty-acid binding protein (FABP) family.

This is an uncharacterized protein from Caenorhabditis elegans.